The following is a 1144-amino-acid chain: Ribonucleoside-diphosphate reductase large subunit (1144 aa).

Residues 1–33 (MANRPAASALAGARSPSERQEPREPEVAPPGGD) are disordered. Over residues 16–26 (PSERQEPREPE) the composition is skewed to basic and acidic residues. Positions 55–75 (AYRISDSSFVQCGSNCSMIID) match the RIP homotypic interaction motif (RHIM) motif. Residues 118–324 (SGPSATTSVG…TDPGYPVPLE (207 aa)) form a disordered region. A compositionally biased stretch (polar residues) spans 119–132 (GPSATTSVGTQTSG). The span at 141–159 (TPEPQGPQAVPPPPPPPFP) shows a compositional bias: pro residues. Over residues 164–179 (CCARRDARGGAEKDVG) the composition is skewed to basic and acidic residues. Positions 192–204 (SETEDSDSSDEDT) are enriched in acidic residues. Low complexity-rich tracts occupy residues 205–216 (GSGSETLSRSSS) and 279–305 (GSATDPRASADSDSAAHAAAPQADVAP). Residues Thr573, 588–589 (SC), Gly619, 798–802 (NLCTE), and 975–979 (PTAAS) contribute to the substrate site. Cys589 and Cys815 are joined by a disulfide. The active-site Proton acceptor is Asn798. Catalysis depends on Cys800, which acts as the Cysteine radical intermediate. The Proton acceptor role is filled by Glu802.

It belongs to the ribonucleoside diphosphate reductase large chain family. Heterotetramer composed of a homodimer of the large subunit (R1) and a homodimer of the small subunit (R2). Larger multisubunit protein complex are also active, composed of (R1)n(R2)n. May self-assemble (via RIP homotypic interaction motif/RHIM) into homomeric fibrillar amyloid structures. Interacts (via RHIM) with human RIPK1 (via RHIM). Interacts (via RHIM) with human RIPK3 (via RHIM). May interact (via RHIM) with human ZBP1 (via RHIM). Interacts (via C-terminus) with host CASP8.

The enzyme catalyses a 2'-deoxyribonucleoside 5'-diphosphate + [thioredoxin]-disulfide + H2O = a ribonucleoside 5'-diphosphate + [thioredoxin]-dithiol. Its function is as follows. Ribonucleoside-diphosphate reductase holoenzyme that provides the precursors necessary for viral DNA synthesis. Allows virus growth in non-dividing cells, as well as reactivation from latency in infected hosts. Catalyzes the biosynthesis of deoxyribonucleotides from the corresponding ribonucleotides. The N-terminal region confers antiapoptotic activity in differentiated cells such as neurons and is important for viral reactivation to increase neural survivability. Prevents host necroptosis by targeting host RIPK1 and RIPK3, thereby hampering the formation of necroptotic RIPK1-RIPK3 complexes. May form hetero-amyloid structures with host proteins RIPK3 or ZBP1, thereby preventing RIPK3- and ZBP1-mediated necroptosis. In addition, inhibits extrinsic apoptosis by targeting host CASP8. The polypeptide is Ribonucleoside-diphosphate reductase large subunit (Homo sapiens (Human)).